We begin with the raw amino-acid sequence, 91 residues long: Small ribosomal subunit protein uS17 (91 aa).

This sequence belongs to the universal ribosomal protein uS17 family. Part of the 30S ribosomal subunit.

In terms of biological role, one of the primary rRNA binding proteins, it binds specifically to the 5'-end of 16S ribosomal RNA. This is Small ribosomal subunit protein uS17 from Acidithiobacillus ferrooxidans (strain ATCC 23270 / DSM 14882 / CIP 104768 / NCIMB 8455) (Ferrobacillus ferrooxidans (strain ATCC 23270)).